The following is a 144-amino-acid chain: Large ribosomal subunit protein uL15 (144 aa).

Residues 1–58 (MRLNTLAPAAGSKHAPKRVGRGIGSGLGKTGGRGHKGQKSRSGGKVRPGFEGGQMPLK) form a disordered region. The segment covering 21 to 31 (RGIGSGLGKTG) has biased composition (gly residues). Residues 32–44 (GRGHKGQKSRSGG) show a composition bias toward basic residues.

The protein belongs to the universal ribosomal protein uL15 family. In terms of assembly, part of the 50S ribosomal subunit.

In terms of biological role, binds to the 23S rRNA. The protein is Large ribosomal subunit protein uL15 of Vibrio parahaemolyticus serotype O3:K6 (strain RIMD 2210633).